The following is a 130-amino-acid chain: Small ribosomal subunit protein uS8 (130 aa).

This sequence belongs to the universal ribosomal protein uS8 family. In terms of assembly, part of the 30S ribosomal subunit.

Its function is as follows. One of the primary rRNA binding proteins, it binds directly to 16S rRNA central domain where it helps coordinate assembly of the platform of the 30S subunit. The sequence is that of Small ribosomal subunit protein uS8 from Pyrobaculum calidifontis (strain DSM 21063 / JCM 11548 / VA1).